The primary structure comprises 456 residues: Cyclic AMP-responsive element-binding protein 3-like protein 3 (456 aa).

Disordered regions lie at residues 1–20 and 47–120; these read MDGD…MGPI and GHGE…KGPC. Residues 1 to 317 lie on the Cytoplasmic side of the membrane; sequence MDGDLAIGKM…STSKSAQTGT (317 aa). Positions 71 to 85 are enriched in polar residues; it reads DSDSPTWSPAASDSG. The region spanning 238-301 is the bZIP domain; the sequence is MLKKIRRKIR…LSLLEQLKKL (64 aa). A basic motif region spans residues 240-269; the sequence is KKIRRKIRNKQSAQESRKKKKEYIDGLETR. The interval 280-301 is leucine-zipper; that stretch reads LQRKVLHLEKQNLSLLEQLKKL. Residue lysine 289 forms a Glycyl lysine isopeptide (Lys-Gly) (interchain with G-Cter in ubiquitin) linkage. The chain crosses the membrane as a helical; Signal-anchor for type II membrane protein span at residues 318–338; that stretch reads CIAVLLFSFALIVLPSISPFA. At 339-456 the chain is on the lumenal side; that stretch reads SNRAESPGDF…VGLEAAGGEL (118 aa). Disordered regions lie at residues 365–423 and 435–456; these read RVAP…QGNS and CAPP…GGEL. Asparagine 408 and asparagine 415 each carry an N-linked (GlcNAc...) asparagine glycan.

This sequence belongs to the bZIP family. ATF subfamily. As to quaternary structure, binds DNA as a dimer. May form homodimers. Interacts with ATF6. Interacts with SYNV1/HRD1; this interaction leads to CREB3L3 ubiquitination and proteasomal degradation. In terms of processing, controlled by regulated intramembrane proteolysis (RIP). Following ER stress a fragment containing the cytoplasmic transcription factor domain is released by proteolysis. The cleavage seems to be performed sequentially by site-1 and site-2 proteases (PS1 and PS2). Post-translationally, N-glycosylation is required for optimal proteolytic activation. Ubiquitinated at Lys-289 by SYNV1/HRD1 via 'Lys-27'-linked ubiquitin.

It is found in the endoplasmic reticulum membrane. The protein localises to the nucleus. In terms of biological role, transcription factor that may act during endoplasmic reticulum stress by activating unfolded protein response target genes. Activated in response to cAMP stimulation. In vitro, binds the cAMP response element (CRE). Activates transcription through box-B element and CRE. Seems to function synergistically with ATF6. In acute inflammatory response, may activate expression of acute phase response (APR) genes. May be involved in growth suppression. Regulates FGF21 transcription. Plays a crucial role in the regulation of triglyceride metabolism and is required for the maintenance of normal plasma triglyceride concentrations. The protein is Cyclic AMP-responsive element-binding protein 3-like protein 3 (CREB3L3) of Bos taurus (Bovine).